We begin with the raw amino-acid sequence, 268 residues long: AB hydrolase superfamily protein YisY (268 aa).

In terms of domain architecture, AB hydrolase-1 spans 23–254 (PIIFLHGWPL…NSGHGAFYEE (232 aa)). Active-site residues include S96, D220, and H248.

The protein belongs to the AB hydrolase superfamily.

The chain is AB hydrolase superfamily protein YisY (yisY) from Bacillus subtilis (strain 168).